We begin with the raw amino-acid sequence, 1391 residues long: Axoneme-associated protein mst101(2) (1391 aa).

Disordered stretches follow at residues Glu170–Leu213 and Ser280–Leu300. Residues Thr184–Ser201 show a composition bias toward basic residues. Positions Lys291 to Leu300 are enriched in basic and acidic residues. Tandem repeats lie at residues Lys332–Glu347, Lys348–Glu363, Lys364–Glu379, Lys380–Glu395, Lys396–Glu411, Lys412–Glu427, Arg428–Glu443, Lys444–Glu459, Arg460–Glu475, Lys476–Glu491, Arg492–Ile507, Lys508–Glu523, Lys524–Glu539, Lys540–Glu555, Lys556–Glu571, Lys572–Glu587, Lys588–Glu603, Arg604–Glu619, Lys620–Glu635, Arg636–Glu651, Lys652–Glu667, Lys668–Glu683, Lys684–Glu699, Lys700–Glu715, Arg716–Glu731, Lys732–Lys747, Asn748–Glu763, Lys764–Lys779, Lys780–Lys795, Lys796–Lys811, Lys812–Lys827, Lys828–Lys843, Lys844–Lys859, Lys860–Lys875, Lys876–Lys891, Lys892–Lys907, Lys908–Lys923, Lys924–Lys939, Lys940–Asn955, Lys956–Leu971, Gly972–Ala987, Ala988–Arg1003, Ala1004–Arg1019, Ala1020–Arg1035, Ala1036–Arg1051, Ala1052–Arg1067, Ala1068–Arg1083, Ala1084–Arg1099, Ala1100–Arg1115, Ala1116–Ala1131, Ala1132–Ala1147, Ala1148–Ala1163, Ala1164–Ala1179, Ala1180–Leu1195, Ala1196–Ala1211, Ala1212–Ala1227, Ala1228–Ala1243, Ala1244–Ala1259, and Ala1260–Ala1275. Positions Lys332–Ala1275 are 59 X 16 AA approximate tandem repeats of [KR]-K-X-C-X-X-X-A-K-X-X-K-X-X-X-E. The tract at residues Leu370–Lys429 is disordered. A disordered region spans residues Lys516 to Lys577. The segment covering Lys517–Lys577 has biased composition (basic and acidic residues). Positions Ala729–Lys765 are enriched in basic residues. Disordered regions lie at residues Ala729–Ala881, Glu900–Arg922, and Lys934–Lys1013. Basic and acidic residues predominate over residues Lys766–Ala881. Basic residues-rich tracts occupy residues Lys934–Lys949 and Lys956–Lys976. The span at Arg977–Lys1013 shows a compositional bias: basic and acidic residues. Disordered regions lie at residues Glu1076 to Gln1095 and Lys1104 to Ala1212. Residues Lys1353 to Lys1370 are compositionally biased toward basic and acidic residues. Residues Lys1353–Cys1391 form a disordered region. A compositionally biased stretch (basic residues) spans Asn1371–Cys1391.

In terms of tissue distribution, testis. Primary spermatocytes and early spermatids.

It is found in the cytoplasm. In terms of biological role, possible structural role in the sperm tail. In Drosophila hydei (Fruit fly), this protein is Axoneme-associated protein mst101(2) (mst101(2)).